The sequence spans 175 residues: Auxin-responsive protein IAA28 (175 aa).

The interval 1–39 is disordered; sequence MEEEKRLELRLAPPCHQFTSNNNINGSKQKSSTKETSFL. The short motif at 7–11 is the EAR-like (transcriptional repression) element; that stretch reads LELRL. Residues 17–39 are compositionally biased toward polar residues; that stretch reads QFTSNNNINGSKQKSSTKETSFL. A PB1 domain is found at 80 to 161; sequence ELYVKINMEG…TVKRLHVLKT (82 aa).

The protein belongs to the Aux/IAA family. In terms of assembly, homodimers and heterodimers. Interacts with TPL. In roots and inflorescence stems.

It localises to the nucleus. Aux/IAA proteins are short-lived transcriptional factors that function as repressors of early auxin response genes at low auxin concentrations. Repression is thought to result from the interaction with auxin response factors (ARFs), proteins that bind to the auxin-responsive promoter element (AuxRE). Formation of heterodimers with ARF proteins may alter their ability to modulate early auxin response genes expression. The protein is Auxin-responsive protein IAA28 (IAA28) of Arabidopsis thaliana (Mouse-ear cress).